A 509-amino-acid polypeptide reads, in one-letter code: Major envelope glycoprotein (509 aa).

The N-terminal stretch at 1–17 (MVRTAVLILLLVRFSEP) is a signal peptide. N-linked (GlcNAc...) asparagine; by host glycans are attached at residues Asn-34, Asn-156, Asn-194, Asn-351, Asn-381, and Asn-423. Ser-479 carries the O-palmitoyl serine; by host lipid modification. A helical transmembrane segment spans residues 480–502 (FMLGHAFSFMLTVGVIIFLFCMV). An N-linked (GlcNAc...) asparagine; by host glycan is attached at Asn-504.

Belongs to the baculoviridae gp64 family. In terms of processing, palmitoylated.

The protein localises to the virion membrane. It is found in the host cell membrane. Envelope phosphoglycoprotein which mediates the fusion of viral and host endosomal membranes leading to virus entry into the host cell. This is Major envelope glycoprotein (GP67) from Choristoneura fumiferana nuclear polyhedrosis virus (CfMNPV).